The following is a 235-amino-acid chain: Chromosome partition protein MukE (235 aa).

Residues 204 to 235 (QQEPSQSSLLDGFDADDTGHHDSELTMQEGEV) form a disordered region.

It belongs to the MukE family. As to quaternary structure, interacts, and probably forms a ternary complex, with MukF and MukB. The complex formation is stimulated by calcium or magnesium.

Its subcellular location is the cytoplasm. It localises to the nucleoid. In terms of biological role, involved in chromosome condensation, segregation and cell cycle progression. May participate in facilitating chromosome segregation by condensation DNA from both sides of a centrally located replisome during cell division. Probably acts via its interaction with MukB and MukF. The chain is Chromosome partition protein MukE from Photobacterium profundum (strain SS9).